A 662-amino-acid chain; its full sequence is Interferon-induced GTP-binding protein Mx1 (662 aa).

Residue M1 is modified to N-acetylmethionine. Residues D67 to P340 enclose the Dynamin-type G domain. A G1 motif region spans residues G77–S84. G77–S84 contributes to the GTP binding site. The interval V102 to R104 is G2 motif. Positions D178–G181 are G3 motif. Residues D178–I182 and T247–D250 contribute to the GTP site. The tract at residues T247 to D250 is G4 motif. The interval K279–G282 is G5 motif. The segment at L341 to E366 is bundle signaling element (BSE). The interval E366–C533 is middle domain. Residues D367–E632 are stalk. Positions K554–K557 are critical for lipid-binding. In terms of domain architecture, GED spans M574–G662.

This sequence belongs to the TRAFAC class dynamin-like GTPase superfamily. Dynamin/Fzo/YdjA family. As to quaternary structure, homooligomer. Oligomerizes into multimeric filamentous or ring-like structures by virtue of its stalk domain. Oligomerization is critical for GTPase activity, protein stability, and recognition of viral target structures. Interacts with TRPC1, TRPC3, TRPC4, TRPC5, TRPC6 and TRPC7. Interacts with HSPA5. Interacts with TUBB/TUBB5. Interacts with DDX39A and DDX39B. ISGylated.

Its subcellular location is the cytoplasm. The protein localises to the endoplasmic reticulum membrane. It localises to the perinuclear region. Interferon-induced dynamin-like GTPase with antiviral activity. This chain is Interferon-induced GTP-binding protein Mx1 (MX1), found in Pongo abelii (Sumatran orangutan).